The chain runs to 377 residues: Flagellin D (377 aa).

Residues 104–128 (NSKADRVAIQEEVTALNDELNRIAE) adopt a coiled-coil conformation.

It belongs to the bacterial flagellin family. Heteromer of multiple flagellin subunits including FlaA, FlaB, FlaC, FlaD and possibly FlaE.

It localises to the secreted. Its subcellular location is the bacterial flagellum. Functionally, flagellin is the subunit protein which polymerizes to form the filaments of bacterial flagella. FlaD is not essential for flagellar synthesis and motility. May have a role in virulence unrelated to motility. This chain is Flagellin D (flaD), found in Vibrio anguillarum (Listonella anguillarum).